The following is a 243-amino-acid chain: MAELLLGVNIDHIATLRNARGTAYPDPVQAAFIAEQAGADGITVHLREDRRHITDRDVCILRQTLDTRMNLEMAVTEEMLAIAVETKPHFCCLVPEKRQEVTTEGGLDVAGQREKMRDACKRLADAGIQVSLFIDADEDQIKAAAEVGAPFIEIHTGCYADAKTDAEQAQELARIAKAATFATSLGLKVNAGHGLTYHNVKAIAAIPEMHELNIGHAIIGRAVMTGLKDAVAEMKRLMLEARG.

A 3-amino-2-oxopropyl phosphate-binding site is contributed by N9. Residue 11–12 (DH) participates in 1-deoxy-D-xylulose 5-phosphate binding. A 3-amino-2-oxopropyl phosphate-binding site is contributed by R20. The active-site Proton acceptor is the H45. Residues R47 and H52 each contribute to the 1-deoxy-D-xylulose 5-phosphate site. Residue E72 is the Proton acceptor of the active site. T102 provides a ligand contact to 1-deoxy-D-xylulose 5-phosphate. H193 (proton donor) is an active-site residue. Residues G194 and 215–216 (GH) contribute to the 3-amino-2-oxopropyl phosphate site.

The protein belongs to the PNP synthase family. Homooctamer; tetramer of dimers.

Its subcellular location is the cytoplasm. The catalysed reaction is 3-amino-2-oxopropyl phosphate + 1-deoxy-D-xylulose 5-phosphate = pyridoxine 5'-phosphate + phosphate + 2 H2O + H(+). Its pathway is cofactor biosynthesis; pyridoxine 5'-phosphate biosynthesis; pyridoxine 5'-phosphate from D-erythrose 4-phosphate: step 5/5. Catalyzes the complicated ring closure reaction between the two acyclic compounds 1-deoxy-D-xylulose-5-phosphate (DXP) and 3-amino-2-oxopropyl phosphate (1-amino-acetone-3-phosphate or AAP) to form pyridoxine 5'-phosphate (PNP) and inorganic phosphate. In Escherichia coli O6:H1 (strain CFT073 / ATCC 700928 / UPEC), this protein is Pyridoxine 5'-phosphate synthase.